Here is a 563-residue protein sequence, read N- to C-terminus: Pyruvate decarboxylase isozyme 1 (563 aa).

N-acetylserine is present on S2. Residues D28, H115, and Y157 each coordinate pyruvate. R161 is subject to Omega-N-methylarginine. Residue K212 forms a Glycyl lysine isopeptide (Lys-Gly) (interchain with G-Cter in ubiquitin) linkage. The residue at position 223 (S223) is a Phosphoserine. Residue R224 coordinates pyruvate. A Glycyl lysine isopeptide (Lys-Gly) (interchain with G-Cter in ubiquitin) cross-link involves residue K233. T266 is subject to Phosphothreonine. Glycyl lysine isopeptide (Lys-Gly) (interchain with G-Cter in ubiquitin) cross-links involve residues K269 and K332. Phosphothreonine occurs at positions 336 and 353. Residues T390 and G413–I415 contribute to the thiamine diphosphate site. D444 lines the Mg(2+) pocket. Residues G445 to S446 and N471 to I476 each bind thiamine diphosphate. Mg(2+) is bound by residues N471 and G473. Position 477 (E477) interacts with pyruvate. Glycyl lysine isopeptide (Lys-Gly) (interchain with G-Cter in ubiquitin) cross-links involve residues K484, K505, and K520. T522 is subject to Phosphothreonine. S526 carries the phosphoserine modification.

It belongs to the TPP enzyme family. Homotetramer. Requires Mg(2+) as cofactor. The cofactor is thiamine diphosphate. Post-translationally, cleavage of N-terminal methionine and N-terminal acetylation by NAT1/ARD1.

The protein localises to the cytoplasm. The protein resides in the nucleus. It carries out the reaction pyruvate + H(+) = acetaldehyde + CO2. The catalysed reaction is 3-methyl-2-oxobutanoate + H(+) = 2-methylpropanal + CO2. The enzyme catalyses (S)-3-methyl-2-oxopentanoate + H(+) = 2-methylbutanal + CO2. It catalyses the reaction indole-3-pyruvate + H(+) = indole-3-acetaldehyde + CO2. It carries out the reaction 3-phenylpyruvate + H(+) = 2-phenylacetaldehyde + CO2. The catalysed reaction is 2-oxobutanoate + H(+) = propanal + CO2. The enzyme catalyses 2-oxopentanoate + H(+) = butanal + CO2. It catalyses the reaction 2 acetaldehyde = acetoin. It carries out the reaction acetaldehyde + pyruvate + H(+) = acetoin + CO2. Its pathway is fermentation; ethanol fermentation. The protein operates within amino-acid degradation; Ehrlich pathway. Its activity is regulated as follows. Allosterically activated by its substrate, pyruvate. Its function is as follows. Major of three pyruvate decarboxylases (PDC1, PDC5, PDC6) implicated in the nonoxidative conversion of pyruvate to acetaldehyde and carbon dioxide during alcoholic fermentation. Most of the produced acetaldehyde is subsequently reduced to ethanol, but some is required for cytosolic acetyl-CoA production for biosynthetic pathways. The enzyme is also one of five 2-oxo acid decarboxylases (PDC1, PDC5, PDC6, ARO10, and THI3) able to decarboxylate more complex 2-oxo acids (alpha-ketoacids) than pyruvate, which seem mainly involved in amino acid catabolism. Here the enzyme catalyzes the decarboxylation of amino acids, which, in a first step, have been transaminated to the corresponding 2-oxo acids. In a third step, the resulting aldehydes are reduced to alcohols, collectively referred to as fusel oils or alcohols. Its preferred substrates are the transaminated amino acids derived from threonine (2-oxobutanoate), norvaline (2-oxopentanoate), valine (3-methyl-2-oxobutanoate, also alpha-keto-isovalerate), isoleucine ((3S)-3-methyl-2-oxopentanoate, also alpha-keto-beta-methylvalerate), phenylalanine (phenylpyruvate), and tryptophan (3-(indol-3-yl)pyruvate), whereas transaminated leucine is no substrate. In a side-reaction the carbanionic intermediate (or active aldehyde) generated by decarboxylation or by activation of an aldehyde can react with an aldehyde via condensation (or carboligation) yielding a 2-hydroxy ketone, collectively called acyloins. This chain is Pyruvate decarboxylase isozyme 1, found in Saccharomyces cerevisiae (strain ATCC 204508 / S288c) (Baker's yeast).